A 179-amino-acid polypeptide reads, in one-letter code: Segregation and condensation protein B (179 aa).

It belongs to the ScpB family. In terms of assembly, homodimer. Homodimerization may be required to stabilize the binding of ScpA to the Smc head domains. Component of a cohesin-like complex composed of ScpA, ScpB and the Smc homodimer, in which ScpA and ScpB bind to the head domain of Smc. The presence of the three proteins is required for the association of the complex with DNA.

Its subcellular location is the cytoplasm. Functionally, participates in chromosomal partition during cell division. May act via the formation of a condensin-like complex containing Smc and ScpA that pull DNA away from mid-cell into both cell halves. This chain is Segregation and condensation protein B, found in Streptococcus equi subsp. equi (strain 4047).